The sequence spans 428 residues: 2,3-bisphosphoglycerate-independent phosphoglycerate mutase 2 (428 aa).

The protein belongs to the BPG-independent phosphoglycerate mutase family. A-PGAM subfamily.

It catalyses the reaction (2R)-2-phosphoglycerate = (2R)-3-phosphoglycerate. Its pathway is carbohydrate degradation; glycolysis; pyruvate from D-glyceraldehyde 3-phosphate: step 3/5. Catalyzes the interconversion of 2-phosphoglycerate and 3-phosphoglycerate. The chain is 2,3-bisphosphoglycerate-independent phosphoglycerate mutase 2 (apgM2) from Methanocaldococcus jannaschii (strain ATCC 43067 / DSM 2661 / JAL-1 / JCM 10045 / NBRC 100440) (Methanococcus jannaschii).